The following is a 159-amino-acid chain: Large ribosomal subunit protein uL15 (159 aa).

The span at 1–13 (MRIHEVTPKEGST) shows a compositional bias: basic and acidic residues. The segment at 1–51 (MRIHEVTPKEGSTKRRRRVGRGISAGQGASCGFGMRGQKSRSGTGTKAGFE) is disordered. Over residues 23-35 (ISAGQGASCGFGM) the composition is skewed to gly residues.

The protein belongs to the universal ribosomal protein uL15 family. As to quaternary structure, part of the 50S ribosomal subunit.

Binds to the 23S rRNA. This is Large ribosomal subunit protein uL15 from Rippkaea orientalis (strain PCC 8801 / RF-1) (Cyanothece sp. (strain PCC 8801)).